Reading from the N-terminus, the 286-residue chain is 4-hydroxybenzoate octaprenyltransferase (286 aa).

Helical transmembrane passes span 20-40, 43-63, 83-103, 135-155, 160-180, 209-229, and 234-254; these read IGILLLLWPTLWGLWLAADGM, PMILVIFVLGTILMRSAGCAI, LATGIISSREALLVAAGLSLC, FFAMPQAYLGIAFSFGIPMAF, GTVPPLAWLLVLANLFWVIAY, VAGILLCHITFLSILTYAGIL, and IWFYGALLVALGLVIVQYTMI.

The protein belongs to the UbiA prenyltransferase family. The cofactor is Mg(2+).

The protein resides in the cell inner membrane. It carries out the reaction all-trans-octaprenyl diphosphate + 4-hydroxybenzoate = 4-hydroxy-3-(all-trans-octaprenyl)benzoate + diphosphate. It participates in cofactor biosynthesis; ubiquinone biosynthesis. In terms of biological role, catalyzes the prenylation of para-hydroxybenzoate (PHB) with an all-trans polyprenyl group. Mediates the second step in the final reaction sequence of ubiquinone-8 (UQ-8) biosynthesis, which is the condensation of the polyisoprenoid side chain with PHB, generating the first membrane-bound Q intermediate 3-octaprenyl-4-hydroxybenzoate. The protein is 4-hydroxybenzoate octaprenyltransferase of Nitrosomonas eutropha (strain DSM 101675 / C91 / Nm57).